We begin with the raw amino-acid sequence, 344 residues long: Tripartite motif-containing protein 44 (344 aa).

Disordered stretches follow at residues Met1–Glu25 and Ala66–Pro165. Residues Gly75–Glu92 are compositionally biased toward basic and acidic residues. Residues Ser93 to Pro165 are compositionally biased toward acidic residues. The segment at Val174 to Leu215 adopts a B box-type zinc-finger fold. Residues Cys179, His182, Cys201, and His207 each contribute to the Zn(2+) site. A coiled-coil region spans residues Ala290–Glu325. The interval Gln309–Thr344 is disordered. Acidic residues predominate over residues Gly330–Thr344. A phosphoserine mark is found at Ser336 and Ser339.

Interacts (via coiled coil) with TRIM17 (via coiled coil). In terms of tissue distribution, highly expressed in testis.

May play a role in the process of differentiation and maturation of neuronal cells. May regulate the activity of TRIM17. Is a negative regulator of PAX6 expression. The protein is Tripartite motif-containing protein 44 (TRIM44) of Homo sapiens (Human).